Here is a 1130-residue protein sequence, read N- to C-terminus: Alpha-mannosidase 2 (1130 aa).

The Cytoplasmic portion of the chain corresponds to 1 to 14 (MRTRVLRCRPFSTR). The helical; Signal-anchor for type II membrane protein transmembrane segment at 15–35 (ILLLLLFVLAFGVYCYFYNAS) threads the bilayer. Topologically, residues 36–1130 (PQNYNKPRIS…MEVKTYKIRF (1095 aa)) are lumenal. Residue Asn117 is glycosylated (N-linked (GlcNAc...) asparagine). Zn(2+) is bound by residues His133 and Asp135. An N-linked (GlcNAc...) asparagine glycan is attached at Asn166. Zn(2+) contacts are provided by Asp247 and His527. Asp247 (nucleophile) is an active-site residue. Asn622, Asn683, Asn1056, and Asn1095 each carry an N-linked (GlcNAc...) asparagine glycan.

Belongs to the glycosyl hydrolase 38 family. In terms of assembly, homodimer; disulfide-linked. Zn(2+) serves as cofactor. N-glycosylated.

It localises to the microsome membrane. The protein resides in the golgi apparatus membrane. It catalyses the reaction N(4)-{beta-D-GlcNAc-(1-&gt;2)-alpha-D-Man-(1-&gt;3)-[alpha-D-Man-(1-&gt;3)-[alpha-D-Man-(1-&gt;6)]-alpha-D-Man-(1-&gt;6)]-beta-D-Man-(1-&gt;4)-beta-D-GlcNAc-(1-&gt;4)-beta-D-GlcNAc}-L-asparaginyl-[protein] + 2 H2O = 2 alpha-D-mannopyranose + an N(4)-{beta-D-GlcNAc-(1-&gt;2)-alpha-D-Man-(1-&gt;3)-[alpha-D-Man-(1-&gt;6)]-beta-D-Man-(1-&gt;4)-beta-D-GlcNAc-(1-&gt;4)-beta-D-GlcNAc}-L-asparaginyl-[protein]. It participates in protein modification; protein glycosylation. Its activity is regulated as follows. Inhibited by swainsonine. In terms of biological role, catalyzes the first committed step in the biosynthesis of complex N-glycans. It controls conversion of high mannose to complex N-glycans; the final hydrolytic step in the N-glycan maturation pathway. This Spodoptera frugiperda (Fall armyworm) protein is Alpha-mannosidase 2.